An 86-amino-acid polypeptide reads, in one-letter code: Small ribosomal subunit protein bS20 (86 aa).

Basic and acidic residues predominate over residues 1-16; the sequence is MANIKSQEKRIRTNER. A disordered region spans residues 1–25; that stretch reads MANIKSQEKRIRTNERRRLRNQSVK.

It belongs to the bacterial ribosomal protein bS20 family.

In terms of biological role, binds directly to 16S ribosomal RNA. This Mycobacterium sp. (strain JLS) protein is Small ribosomal subunit protein bS20.